A 555-amino-acid polypeptide reads, in one-letter code: Glutamine--tRNA ligase (555 aa).

The 'HIGH' region signature appears at 35–45 (PEPNGYLHIGH). ATP is bound by residues 36–38 (EPN) and 42–48 (HIGHAKS). 2 residues coordinate L-glutamine: D68 and Y213. ATP is bound by residues T232 and 262-263 (RL). Positions 269–273 (ITSKR) match the 'KMSKS' region motif.

It belongs to the class-I aminoacyl-tRNA synthetase family. Monomer.

The protein localises to the cytoplasm. It carries out the reaction tRNA(Gln) + L-glutamine + ATP = L-glutaminyl-tRNA(Gln) + AMP + diphosphate. This is Glutamine--tRNA ligase from Azotobacter vinelandii (strain DJ / ATCC BAA-1303).